A 154-amino-acid chain; its full sequence is Large ribosomal subunit protein uL23y (154 aa).

It belongs to the universal ribosomal protein uL23 family.

Binds to a specific region on the 26S rRNA. This Arabidopsis thaliana (Mouse-ear cress) protein is Large ribosomal subunit protein uL23y (RPL23AB).